Here is a 160-residue protein sequence, read N- to C-terminus: MGVFTYETEFTSVIPPPRLYKAFVLDADNLIPKIAPQAVKSAEIVQGDGGVGTIKKIHLGEGSEYSYVKHQIDGLDKDNFVYNYSIIEGDAIGDKVEKISYEIKLVASPSGGSIIKSTSHYHCKGEVEIKEEHVKAGKEKAAGLFKIIENHLLANPEAYN.

Belongs to the BetVI family. Phosphorylated in vivo. Phosphorylation prevents its activity as ribonuclease. As to expression, highly expressed in roots. Expressed a low levels in ripe red fruits.

Functionally, possesses ribonuclease activity in vitro. In Fragaria ananassa (Strawberry), this protein is Major strawberry allergen Fra a 1.08.